Consider the following 200-residue polypeptide: Small ribosomal subunit protein uS4 (200 aa).

Positions 1-13 are enriched in basic residues; it reads MARYRGPKQKIAR. Residues 1-44 are disordered; the sequence is MARYRGPKQKIARRFKEPIFGPSKALERKPYPPGQHGQSRRRRE. Positions 92-154 constitute an S4 RNA-binding domain; sequence ARLDNTVFRM…SQDLEVIQTN (63 aa).

It belongs to the universal ribosomal protein uS4 family. In terms of assembly, part of the 30S ribosomal subunit. Contacts protein S5. The interaction surface between S4 and S5 is involved in control of translational fidelity.

Its function is as follows. One of the primary rRNA binding proteins, it binds directly to 16S rRNA where it nucleates assembly of the body of the 30S subunit. Functionally, with S5 and S12 plays an important role in translational accuracy. The polypeptide is Small ribosomal subunit protein uS4 (Salinibacter ruber (strain DSM 13855 / M31)).